We begin with the raw amino-acid sequence, 1045 residues long: Protein phosphatase Slingshot (1045 aa).

Residues 1–20 show a composition bias toward polar residues; that stretch reads MALVTVQRSPSVAGSCSNSD. Disordered stretches follow at residues 1-35, 58-80, 143-194, and 306-325; these read MALV…GNDR, TQSE…SNNS, KVGG…DNKN, and ESRR…EKEE. The segment covering 66-80 has biased composition (low complexity); the sequence is TDSTRSSNSTQSNNS. The segment covering 149-174 has biased composition (polar residues); sequence GTKSSTSPAVPTQRQLSVEQTATEAS. The segment covering 175–185 has biased composition (basic and acidic residues); that stretch reads SKCDKTADKEN. One can recognise a DEK-C domain in the interval 324–379; that stretch reads EETESVIKMKLKAIMMSVDLDEVTSKYIRGRLEEILDMDLGEYKSFIDAEMLVILG. The Tyrosine-protein phosphatase domain occupies 383 to 524; it reads APTKIFEHVY…LETYSGMLDA (142 aa). Cysteine 468 (phosphocysteine intermediate) is an active-site residue. Residues 529 to 547 show a composition bias toward basic and acidic residues; sequence EKLQRSKSETNLKSTKDAR. 3 disordered regions span residues 529 to 631, 699 to 799, and 1001 to 1045; these read EKLQ…PERS, SHLG…GDNR, and ACSA…SDSS. Positions 560–569 are enriched in polar residues; the sequence is ALNQAKSKST. A compositionally biased stretch (basic residues) spans 586-601; it reads MHRRSIAQKSQRRMVR. The segment covering 602–625 has biased composition (polar residues); it reads RSSSTSPKTQTAVVTKQQSQSMEN. Residues 704–713 show a composition bias toward low complexity; it reads SVSGSSSGNI. At serine 719 the chain carries Phosphoserine. A compositionally biased stretch (low complexity) spans 721 to 732; it reads CSDVFSSQVDSV. 2 stretches are compositionally biased toward polar residues: residues 764–774 and 1008–1021; these read TPQQQKQQSNA and KKTT…SSPV. Low complexity predominate over residues 1029–1045; the sequence is SAASNSNSSASNSSDSS.

The protein belongs to the protein-tyrosine phosphatase family. In terms of assembly, interacts with actin.

The protein localises to the cytoplasm. It is found in the cytoskeleton. The catalysed reaction is O-phospho-L-tyrosyl-[protein] + H2O = L-tyrosyl-[protein] + phosphate. It catalyses the reaction O-phospho-L-seryl-[protein] + H2O = L-seryl-[protein] + phosphate. It carries out the reaction O-phospho-L-threonyl-[protein] + H2O = L-threonyl-[protein] + phosphate. In terms of biological role, protein phosphatase which regulates actin filament dynamics. Dephosphorylates and activates the actin binding/depolymerizing factor tsr/cofilin, which subsequently binds to actin filaments and stimulates their disassembly. Required for axon growth. The chain is Protein phosphatase Slingshot (ssh) from Drosophila melanogaster (Fruit fly).